We begin with the raw amino-acid sequence, 166 residues long: Thiol peroxidase (166 aa).

Residues 18-164 (VKVGDKAPNF…YEKAIEAAKA (147 aa)) enclose the Thioredoxin domain. The active-site Cysteine sulfenic acid (-SOH) intermediate is the Cys60. An intrachain disulfide couples Cys60 to Cys94.

It belongs to the peroxiredoxin family. Tpx subfamily. In terms of assembly, homodimer.

It carries out the reaction a hydroperoxide + [thioredoxin]-dithiol = an alcohol + [thioredoxin]-disulfide + H2O. Thiol-specific peroxidase that catalyzes the reduction of hydrogen peroxide and organic hydroperoxides to water and alcohols, respectively. Plays a role in cell protection against oxidative stress by detoxifying peroxides. This Halalkalibacterium halodurans (strain ATCC BAA-125 / DSM 18197 / FERM 7344 / JCM 9153 / C-125) (Bacillus halodurans) protein is Thiol peroxidase.